The primary structure comprises 502 residues: Mitochondrial fusion and transport protein UGO1 (502 aa).

Met-1 is modified (N-acetylmethionine). At 1 to 293 (MNNNNVTEAT…VINSPDISKS (293 aa)) the chain is on the cytoplasmic side. The binds FZO1 stretch occupies residues 1 to 294 (MNNNNVTEAT…INSPDISKSF (294 aa)). A Solcar repeat occupies 288-383 (PDISKSFILA…NSFFNKLFDL (96 aa)). Residues 294–314 (FILALGAGVFTSIILLPVDLI) traverse the membrane as a helical; Signal-anchor for type II membrane protein segment. Residues 312 to 502 (DLIRTRLIVT…VDINMEQEKF (191 aa)) are binds MGM1. The Mitochondrial intermembrane portion of the chain corresponds to 315 to 502 (RTRLIVTSFK…VDINMEQEKF (188 aa)).

As to quaternary structure, interacts with FZO1 through its cytoplasmic domain and with MGM1 through its mitochondrial intermembrane space domain.

The protein resides in the mitochondrion outer membrane. Its function is as follows. Required for mitochondrial fusion as well as normal mitochondrial morphology by bridging the essential interaction between FZO1 and MGM1. May coordinate fusion of inner and outer membranes during mitochondrial fusion. This chain is Mitochondrial fusion and transport protein UGO1, found in Saccharomyces cerevisiae (strain ATCC 204508 / S288c) (Baker's yeast).